The primary structure comprises 129 residues: Small ribosomal subunit protein uS8 (129 aa).

The protein belongs to the universal ribosomal protein uS8 family. Part of the 30S ribosomal subunit.

One of the primary rRNA binding proteins, it binds directly to 16S rRNA central domain where it helps coordinate assembly of the platform of the 30S subunit. This is Small ribosomal subunit protein uS8 from Nanoarchaeum equitans (strain Kin4-M).